Reading from the N-terminus, the 308-residue chain is HTH-type transcriptional activator AllS (308 aa).

The region spanning 2 to 59 is the HTH lysR-type domain; it reads FDPETLRTFIAVAETGSFSKAAERLCKTTATISYRIKLLEENTGVALFFRTTRSVTLT. The segment at residues 19 to 38 is a DNA-binding region (H-T-H motif); sequence FSKAAERLCKTTATISYRIK.

This sequence belongs to the LysR transcriptional regulatory family.

Functionally, positive regulator essential for the expression of AllD operon. Binds to the AllD promoter. In Escherichia coli O157:H7, this protein is HTH-type transcriptional activator AllS (allS).